The chain runs to 136 residues: NADPH-dependent 7-cyano-7-deazaguanine reductase (136 aa).

The active-site Thioimide intermediate is the C53. D60 (proton donor) is an active-site residue. Substrate contacts are provided by residues 75 to 77 (VEL) and 94 to 95 (HE).

It belongs to the GTP cyclohydrolase I family. QueF type 1 subfamily.

The protein localises to the cytoplasm. It carries out the reaction 7-aminomethyl-7-carbaguanine + 2 NADP(+) = 7-cyano-7-deazaguanine + 2 NADPH + 3 H(+). Its pathway is tRNA modification; tRNA-queuosine biosynthesis. Its function is as follows. Catalyzes the NADPH-dependent reduction of 7-cyano-7-deazaguanine (preQ0) to 7-aminomethyl-7-deazaguanine (preQ1). The protein is NADPH-dependent 7-cyano-7-deazaguanine reductase of Trichormus variabilis (strain ATCC 29413 / PCC 7937) (Anabaena variabilis).